We begin with the raw amino-acid sequence, 728 residues long: Polyribonucleotide nucleotidyltransferase (728 aa).

Residues Asp513 and Asp519 each coordinate Mg(2+). The region spanning 580-640 (PKVKMILIKP…EIVDLTVTYI (61 aa)) is the KH domain. One can recognise an S1 motif domain in the interval 650–724 (ENVYEVKILR…ERGQIDLSKK (75 aa)).

It belongs to the polyribonucleotide nucleotidyltransferase family. Requires Mg(2+) as cofactor.

It is found in the cytoplasm. The catalysed reaction is RNA(n+1) + phosphate = RNA(n) + a ribonucleoside 5'-diphosphate. Functionally, involved in mRNA degradation. Catalyzes the phosphorolysis of single-stranded polyribonucleotides processively in the 3'- to 5'-direction. The chain is Polyribonucleotide nucleotidyltransferase from Phytoplasma mali (strain AT).